A 61-amino-acid chain; its full sequence is Small ribosomal subunit protein uS14 (61 aa).

4 residues coordinate Zn(2+): Cys-24, Cys-27, Cys-40, and Cys-43.

It belongs to the universal ribosomal protein uS14 family. Zinc-binding uS14 subfamily. Part of the 30S ribosomal subunit. Contacts proteins S3 and S10. Zn(2+) is required as a cofactor.

Its function is as follows. Binds 16S rRNA, required for the assembly of 30S particles and may also be responsible for determining the conformation of the 16S rRNA at the A site. This chain is Small ribosomal subunit protein uS14, found in Pseudothermotoga lettingae (strain ATCC BAA-301 / DSM 14385 / NBRC 107922 / TMO) (Thermotoga lettingae).